Reading from the N-terminus, the 205-residue chain is CD83 antigen (205 aa).

The N-terminal stretch at 1-19 (MSRGLQLLLLSCAYSLAPA) is a signal peptide. Positions 20–114 (TPEVKVACSE…YRCTLQDPDG (95 aa)) constitute an Ig-like V-type domain. The Extracellular segment spans residues 20–144 (TPEVKVACSE…EETFKKYRAE (125 aa)). Cysteine 35 and cysteine 107 are joined by a disulfide. The span at 60 to 69 (METPQEDHLR) shows a compositional bias: basic and acidic residues. A disordered region spans residues 60–81 (METPQEDHLRGQHYHQKGQNGS). N-linked (GlcNAc...) asparagine glycosylation is found at asparagine 79, asparagine 96, and asparagine 117. A helical transmembrane segment spans residues 145-166 (IVLLLALVIFYLTLIIFTCKFA). Over 167-205 (RLQSIFPDFSKAGMERAFLPVTSPNKHLGLVTPHKTELV) the chain is Cytoplasmic.

In terms of assembly, monomer. Homodimer. Homotrimer. Interacts with MARCHF1; this interaction antagonizes MARCHF1-mediated MHC II and CD86 down-regulation. Glycosylated when expressed on activated dendritic cells. In terms of tissue distribution, expressed by activated lymphocytes, Langerhans cells and activatd dendritic cells.

The protein localises to the membrane. In terms of biological role, transmembrane glycoprotein predominantly found on the surface of many immune cells including dendritic cells or lymphocytes that plays various roles in immune response regulation. Plays an essential role in CD4(+) T-selection, differentiation and stability by regulating the activity of the major E3 ubiquitin ligase responsible for controlling MHCII trafficking MARCHF8. Also inhibits MARCHF1 association with MHCII or CD86 to prevent their ubiquitination and subsequent degradation. In addition, acts as an important modulator of protective responses against acute infections. The protein is CD83 antigen (CD83) of Homo sapiens (Human).